The chain runs to 269 residues: MTNQKISRDVHHLAHRMSGFQESSRIVPEEAPIAMSYNGTTQAVMMATPGDLEDFAIGFSLTENIVTRIEEIEALDIVAFESGIDIQMKLAKQPEQRLSARRRFMAGPVGCGLCGIDSIEQALRPLHPLEECSTTFTTRDIAAAVASLGAAQALNAKTHATHGAGFFRPGEGLFAVREDIGRHNALDKLIGAVAREGLLAEEGIVAITSRVSVEMVQKAVMLGVPVLAAISAPTALAIRTAEAANLTLVALVRDEEFDIYTHCGRIIES.

The Cysteine persulfide intermediate role is filled by Cys-111.

This sequence belongs to the FdhD family.

The protein localises to the cytoplasm. In terms of biological role, required for formate dehydrogenase (FDH) activity. Acts as a sulfur carrier protein that transfers sulfur from IscS to the molybdenum cofactor prior to its insertion into FDH. The sequence is that of Sulfur carrier protein FdhD from Brucella abortus biovar 1 (strain 9-941).